We begin with the raw amino-acid sequence, 397 residues long: S-adenosylmethionine:tRNA ribosyltransferase-isomerase (397 aa).

This sequence belongs to the QueA family. In terms of assembly, monomer.

Its subcellular location is the cytoplasm. The catalysed reaction is 7-aminomethyl-7-carbaguanosine(34) in tRNA + S-adenosyl-L-methionine = epoxyqueuosine(34) in tRNA + adenine + L-methionine + 2 H(+). It participates in tRNA modification; tRNA-queuosine biosynthesis. Its function is as follows. Transfers and isomerizes the ribose moiety from AdoMet to the 7-aminomethyl group of 7-deazaguanine (preQ1-tRNA) to give epoxyqueuosine (oQ-tRNA). This is S-adenosylmethionine:tRNA ribosyltransferase-isomerase from Nostoc sp. (strain PCC 7120 / SAG 25.82 / UTEX 2576).